The primary structure comprises 206 residues: 21.9 kDa heat shock protein (206 aa).

An N-terminal signal peptide occupies residues 1-29; the sequence is MAAVAEREVLGMVAAVAAMVVMMAPPAAA. Residues 65-187 form the sHSP domain; it reads EPAAVALARC…GREPRVVAID (123 aa). The Cell attachment site signature appears at 94–96; sequence RGD.

Belongs to the small heat shock protein (HSP20) family. As to quaternary structure, may form oligomeric structures.

The protein localises to the endoplasmic reticulum. The chain is 21.9 kDa heat shock protein (HSP21.9) from Oryza sativa subsp. japonica (Rice).